Reading from the N-terminus, the 299-residue chain is ATP phosphoribosyltransferase (299 aa).

The protein belongs to the ATP phosphoribosyltransferase family. Long subfamily. Mg(2+) serves as cofactor.

The protein localises to the cytoplasm. It catalyses the reaction 1-(5-phospho-beta-D-ribosyl)-ATP + diphosphate = 5-phospho-alpha-D-ribose 1-diphosphate + ATP. It participates in amino-acid biosynthesis; L-histidine biosynthesis; L-histidine from 5-phospho-alpha-D-ribose 1-diphosphate: step 1/9. Feedback inhibited by histidine. Functionally, catalyzes the condensation of ATP and 5-phosphoribose 1-diphosphate to form N'-(5'-phosphoribosyl)-ATP (PR-ATP). Has a crucial role in the pathway because the rate of histidine biosynthesis seems to be controlled primarily by regulation of HisG enzymatic activity. In Campylobacter jejuni subsp. jejuni serotype O:2 (strain ATCC 700819 / NCTC 11168), this protein is ATP phosphoribosyltransferase.